Consider the following 202-residue polypeptide: Imidazole glycerol phosphate synthase subunit HisH 2 (202 aa).

Residues 1 to 202 (MIAIIDYGMG…KLMENFIKQA (202 aa)) enclose the Glutamine amidotransferase type-1 domain. Cys-80 serves as the catalytic Nucleophile. Residues His-183 and Glu-185 contribute to the active site.

As to quaternary structure, heterodimer of HisH and HisF.

It is found in the cytoplasm. The enzyme catalyses 5-[(5-phospho-1-deoxy-D-ribulos-1-ylimino)methylamino]-1-(5-phospho-beta-D-ribosyl)imidazole-4-carboxamide + L-glutamine = D-erythro-1-(imidazol-4-yl)glycerol 3-phosphate + 5-amino-1-(5-phospho-beta-D-ribosyl)imidazole-4-carboxamide + L-glutamate + H(+). It carries out the reaction L-glutamine + H2O = L-glutamate + NH4(+). It participates in amino-acid biosynthesis; L-histidine biosynthesis; L-histidine from 5-phospho-alpha-D-ribose 1-diphosphate: step 5/9. In terms of biological role, IGPS catalyzes the conversion of PRFAR and glutamine to IGP, AICAR and glutamate. The HisH subunit provides the glutamine amidotransferase activity that produces the ammonia necessary to HisF for the synthesis of IGP and AICAR. This is Imidazole glycerol phosphate synthase subunit HisH 2 (hisH2) from Methanococcus maripaludis (strain DSM 14266 / JCM 13030 / NBRC 101832 / S2 / LL).